Reading from the N-terminus, the 339-residue chain is Anthranilate phosphoribosyltransferase (339 aa).

Residues glycine 78, 81–82 (GD), threonine 86, 88–91 (NAST), 106–114 (KHGNRSVTS), and serine 118 contribute to the 5-phospho-alpha-D-ribose 1-diphosphate site. Glycine 78 contacts anthranilate. Serine 90 serves as a coordination point for Mg(2+). Residue asparagine 109 coordinates anthranilate. Arginine 164 contacts anthranilate. Positions 225 and 226 each coordinate Mg(2+). A compositionally biased stretch (basic and acidic residues) spans 248 to 265 (TVAPEDVGLDRADPKDVA). Residues 248-271 (TVAPEDVGLDRADPKDVAGADPET) form a disordered region.

This sequence belongs to the anthranilate phosphoribosyltransferase family. Homodimer. Requires Mg(2+) as cofactor.

It carries out the reaction N-(5-phospho-beta-D-ribosyl)anthranilate + diphosphate = 5-phospho-alpha-D-ribose 1-diphosphate + anthranilate. It functions in the pathway amino-acid biosynthesis; L-tryptophan biosynthesis; L-tryptophan from chorismate: step 2/5. Its function is as follows. Catalyzes the transfer of the phosphoribosyl group of 5-phosphorylribose-1-pyrophosphate (PRPP) to anthranilate to yield N-(5'-phosphoribosyl)-anthranilate (PRA). This chain is Anthranilate phosphoribosyltransferase, found in Methanopyrus kandleri (strain AV19 / DSM 6324 / JCM 9639 / NBRC 100938).